The following is a 256-amino-acid chain: Trans-aconitate 2-methyltransferase (256 aa).

The protein belongs to the methyltransferase superfamily. Tam family.

It localises to the cytoplasm. It carries out the reaction trans-aconitate + S-adenosyl-L-methionine = (E)-3-(methoxycarbonyl)pent-2-enedioate + S-adenosyl-L-homocysteine. Functionally, catalyzes the S-adenosylmethionine monomethyl esterification of trans-aconitate. The chain is Trans-aconitate 2-methyltransferase from Rhizobium rhizogenes (strain K84 / ATCC BAA-868) (Agrobacterium radiobacter).